The sequence spans 632 residues: tRNA uridine 5-carboxymethylaminomethyl modification enzyme MnmG (632 aa).

FAD is bound by residues 15-20 (GAGHAG), Ile127, and Ser182. Residue 276-290 (GPRYCPSIEDKIVRF) coordinates NAD(+). Position 373 (Gln373) interacts with FAD.

It belongs to the MnmG family. As to quaternary structure, homodimer. Heterotetramer of two MnmE and two MnmG subunits. FAD is required as a cofactor.

It localises to the cytoplasm. Functionally, NAD-binding protein involved in the addition of a carboxymethylaminomethyl (cmnm) group at the wobble position (U34) of certain tRNAs, forming tRNA-cmnm(5)s(2)U34. This chain is tRNA uridine 5-carboxymethylaminomethyl modification enzyme MnmG, found in Streptococcus pyogenes serotype M3 (strain SSI-1).